The following is a 142-amino-acid chain: Protein Turandot X (142 aa).

An N-terminal signal peptide occupies residues 1–22 (MGLSIGSLLICVFLGIVPFATA).

The protein belongs to the Turandot family.

It is found in the secreted. A humoral factor that may play a role in stress tolerance. The sequence is that of Protein Turandot X from Drosophila melanogaster (Fruit fly).